The following is a 210-amino-acid chain: Large ribosomal subunit protein bL25 (210 aa).

The span at Glu-191–Pro-200 shows a compositional bias: low complexity. A disordered region spans residues Glu-191–Lys-210.

It belongs to the bacterial ribosomal protein bL25 family. CTC subfamily. In terms of assembly, part of the 50S ribosomal subunit; part of the 5S rRNA/L5/L18/L25 subcomplex. Contacts the 5S rRNA. Binds to the 5S rRNA independently of L5 and L18.

Its function is as follows. This is one of the proteins that binds to the 5S RNA in the ribosome where it forms part of the central protuberance. The polypeptide is Large ribosomal subunit protein bL25 (Paracidovorax citrulli (strain AAC00-1) (Acidovorax citrulli)).